A 119-amino-acid polypeptide reads, in one-letter code: Large ribosomal subunit protein uL22 (119 aa).

This sequence belongs to the universal ribosomal protein uL22 family. In terms of assembly, part of the 50S ribosomal subunit.

In terms of biological role, this protein binds specifically to 23S rRNA; its binding is stimulated by other ribosomal proteins, e.g. L4, L17, and L20. It is important during the early stages of 50S assembly. It makes multiple contacts with different domains of the 23S rRNA in the assembled 50S subunit and ribosome. Functionally, the globular domain of the protein is located near the polypeptide exit tunnel on the outside of the subunit, while an extended beta-hairpin is found that lines the wall of the exit tunnel in the center of the 70S ribosome. This chain is Large ribosomal subunit protein uL22, found in Chlorobium phaeobacteroides (strain DSM 266 / SMG 266 / 2430).